Consider the following 432-residue polypeptide: Adenylosuccinate synthetase (432 aa).

GTP-binding positions include 13–19 and 41–43; these read GDEGKGK and GHT. The Proton acceptor role is filled by Asp14. Residues Asp14 and Gly41 each contribute to the Mg(2+) site. IMP is bound by residues 14–17, 39–42, Thr130, Arg144, Gln225, Thr240, and Arg304; these read DEGK and NAGH. His42 (proton donor) is an active-site residue. 300-306 lines the substrate pocket; it reads ATTGRRR. Residues Arg306, 332-334, and 415-417 each bind GTP; these read KLD and STG.

This sequence belongs to the adenylosuccinate synthetase family. As to quaternary structure, homodimer. Requires Mg(2+) as cofactor.

It localises to the cytoplasm. The catalysed reaction is IMP + L-aspartate + GTP = N(6)-(1,2-dicarboxyethyl)-AMP + GDP + phosphate + 2 H(+). It participates in purine metabolism; AMP biosynthesis via de novo pathway; AMP from IMP: step 1/2. Plays an important role in the de novo pathway of purine nucleotide biosynthesis. Catalyzes the first committed step in the biosynthesis of AMP from IMP. This chain is Adenylosuccinate synthetase, found in Pectobacterium atrosepticum (strain SCRI 1043 / ATCC BAA-672) (Erwinia carotovora subsp. atroseptica).